A 490-amino-acid polypeptide reads, in one-letter code: GTPase Der (490 aa).

EngA-type G domains are found at residues P3–E166 and I196–V369. GTP is bound by residues G9 to S16, D56 to I60, N118 to D121, G202 to S209, D249 to V253, and N314 to D317. A KH-like domain is found at T370–E454. Residues G452–R490 form a disordered region. Basic residues predominate over residues N470–R490.

It belongs to the TRAFAC class TrmE-Era-EngA-EngB-Septin-like GTPase superfamily. EngA (Der) GTPase family. As to quaternary structure, associates with the 50S ribosomal subunit.

In terms of biological role, GTPase that plays an essential role in the late steps of ribosome biogenesis. The chain is GTPase Der from Pseudomonas syringae pv. syringae (strain B728a).